The sequence spans 89 residues: Small ribosomal subunit protein uS15 (89 aa).

The protein belongs to the universal ribosomal protein uS15 family. Part of the 30S ribosomal subunit. Forms a bridge to the 50S subunit in the 70S ribosome, contacting the 23S rRNA.

Its function is as follows. One of the primary rRNA binding proteins, it binds directly to 16S rRNA where it helps nucleate assembly of the platform of the 30S subunit by binding and bridging several RNA helices of the 16S rRNA. In terms of biological role, forms an intersubunit bridge (bridge B4) with the 23S rRNA of the 50S subunit in the ribosome. This Chloroflexus aurantiacus (strain ATCC 29366 / DSM 635 / J-10-fl) protein is Small ribosomal subunit protein uS15.